Reading from the N-terminus, the 405-residue chain is Cysteine desulfurase IscS (405 aa).

Residues Ala75–Thr76, Asn155, Gln183, and Ser203–His205 contribute to the pyridoxal 5'-phosphate site. The residue at position 206 (Lys206) is an N6-(pyridoxal phosphate)lysine. Thr243 is a binding site for pyridoxal 5'-phosphate. Cys329 functions as the Cysteine persulfide intermediate in the catalytic mechanism. Cys329 lines the [2Fe-2S] cluster pocket.

The protein belongs to the class-V pyridoxal-phosphate-dependent aminotransferase family. NifS/IscS subfamily. As to quaternary structure, homodimer. Forms a heterotetramer with IscU, interacts with other sulfur acceptors. Pyridoxal 5'-phosphate is required as a cofactor.

The protein resides in the cytoplasm. The catalysed reaction is (sulfur carrier)-H + L-cysteine = (sulfur carrier)-SH + L-alanine. Its pathway is cofactor biosynthesis; iron-sulfur cluster biosynthesis. Functionally, master enzyme that delivers sulfur to a number of partners involved in Fe-S cluster assembly, tRNA modification or cofactor biosynthesis. Catalyzes the removal of elemental sulfur atoms from cysteine to produce alanine. Functions as a sulfur delivery protein for Fe-S cluster synthesis onto IscU, an Fe-S scaffold assembly protein, as well as other S acceptor proteins. In Pseudoalteromonas translucida (strain TAC 125), this protein is Cysteine desulfurase IscS.